A 1127-amino-acid polypeptide reads, in one-letter code: MASSSSSSSRNWSYHVFPSFSGEDVRNTFLSHFLKELDRKLIISFKDNEIERSQSLDPELKHGIRNSRIAVVVFSKTYASSSWCLNELLEIVKCKKEFGQLVIPIFYNLDPSHVRKQTGDFGKIFEKTCRNKTVDEKIRWKEALTDVANILGYHIVTWDNEASMIEEIANDILGKMNISPSNDFEDLVGIEDHITKMSSLLHLESEEVRMVGIWGPSGIGKTTISRALFSRLSCQFQSSVFIDKVFISKSMEVYSGANLVDYNMKLHLQRAFLAEIFDKKDIKIHVGAMEKMVKHRKALIVIDDLDDQDVLDALAGQTQWFGSGSRIIVVTENKHFLRANRIDHIYKVCLPSNALALEMFCRSAFKKNSPPDDFLELSSEVALRAGNLPLGLNVLGSNLRGINKGYWIDMLPRLQGLDGKIGKTLRVSYDGLNNRKDEAIFRHIACIFNGEKVSDIKLLLANSNLDVNIGLKNLVDRSLICERFNTLEMHSLLQELGKEIVRTESNQPGEREFLVDLKDICDVLEHNTGTKKVLGITLDIDETDELHIHESSFKGMHNLLFLKIYTKKLDQKKKVRWHLPERFDYLPSRLRLLRFDRYPSKCLPSNFHPENLVKLQMQQSKLEKLWDGVHSLAGLRNMDLRGSRNLKEIPDLSMATNLETLKLSSCSSLVELPSSIQYLNKLNDLDMSYCDHLETIPSGVNLKSLDRLNLSGCSRLKSFLDIPTNISWLDIGQTADIPSNLRLQNLDELILCERVQLRTPLMTMLSPTLTRLTFSNNPSFVEVPSSIQNLYQLEHLEIMNCRNLVTLPTGINLDSLISLDLSHCSQLKTFPDISTNISDLNLSYTAIEEVPLSIEKLSLLCYLDMNGCSNLLCVSPNISKLKHLERADFSDCVELTEASWNGSSSEMVKLLPADNFSTVKLNFINCFKLDLTALIQNQTFFMQLILTGEEVPSYFTHRTSGDSISLPHISVCQSFFSFRGCTVIDVDSFSTISVSFDIEVCCRFIDRFGNHFDSTDFPGYFITTKLGGHLVVFDCYFPFNEEFTTFLDGQFNYDHVDIQFRLTNDNSQLKLKGCGILLSEDVPSLDNRPCSPNILPGVCEDSALERRSFRTKMRMMRMRLLKKLLNR.

An N-acetylmethionine modification is found at methionine 1. Residues 12–176 (WSYHVFPSFS…EIANDILGKM (165 aa)) enclose the TIR domain. The active site involves glutamate 87. 11 LRR repeats span residues 197–221 (MSSL…GIGK), 540–563 (IDET…LFLK), 587–609 (PSRL…NFHP), 610–632 (ENLV…VHSL), 633–656 (AGLR…SMAT), 658–679 (LETL…IQYL), 680–704 (NKLN…NLKS), 766–790 (SPTL…IQNL), 791–813 (YQLE…GINL), 814–834 (DSLI…PDIS), and 835–857 (TNIS…IEKL).

As to quaternary structure, interacts with EDS1. As to expression, ubiquitous.

It catalyses the reaction NAD(+) + H2O = ADP-D-ribose + nicotinamide + H(+). Its function is as follows. Disease resistance (R) protein that specifically recognizes the hopA1 type III effector avirulence protein from Pseudomonas syringae. Resistance proteins guard the plant against pathogens that contain an appropriate avirulence protein via an indirect interaction with this avirulence protein. That triggers a defense system including the hypersensitive response, which restricts the pathogen growth. This is Disease resistance protein RPS6 from Arabidopsis thaliana (Mouse-ear cress).